A 705-amino-acid polypeptide reads, in one-letter code: Elongation factor G (705 aa).

The 284-residue stretch at 8-291 folds into the tr-type G domain; the sequence is EKVRNIGIMA…AVVEYLPSPI (284 aa). Residues 17-24, 90-94, and 144-147 contribute to the GTP site; these read AHIDAGKT, DTPGH, and NKMD.

It belongs to the TRAFAC class translation factor GTPase superfamily. Classic translation factor GTPase family. EF-G/EF-2 subfamily.

The protein localises to the cytoplasm. Its function is as follows. Catalyzes the GTP-dependent ribosomal translocation step during translation elongation. During this step, the ribosome changes from the pre-translocational (PRE) to the post-translocational (POST) state as the newly formed A-site-bound peptidyl-tRNA and P-site-bound deacylated tRNA move to the P and E sites, respectively. Catalyzes the coordinated movement of the two tRNA molecules, the mRNA and conformational changes in the ribosome. This is Elongation factor G from Chloroherpeton thalassium (strain ATCC 35110 / GB-78).